The primary structure comprises 177 residues: Large ribosomal subunit protein uL6 (177 aa).

It belongs to the universal ribosomal protein uL6 family. In terms of assembly, part of the 50S ribosomal subunit.

In terms of biological role, this protein binds to the 23S rRNA, and is important in its secondary structure. It is located near the subunit interface in the base of the L7/L12 stalk, and near the tRNA binding site of the peptidyltransferase center. This Alteromonas mediterranea (strain DSM 17117 / CIP 110805 / LMG 28347 / Deep ecotype) protein is Large ribosomal subunit protein uL6.